The primary structure comprises 524 residues: AAA ATPase forming ring-shaped complexes (524 aa).

A disordered region spans residues 1-29; sequence MGMGQEKHTDAASQSRDPEAVAAHENDQL. The stretch at 22–59 forms a coiled coil; that stretch reads AAHENDQLRQRNHALAKALTRATEELRKAKAQLEQFMA. 250–255 contacts ATP; sequence GNGKTL.

Belongs to the AAA ATPase family. Homohexamer. Assembles into a hexameric ring structure.

This chain is AAA ATPase forming ring-shaped complexes, found in Bifidobacterium animalis subsp. lactis (strain BB-12).